Consider the following 163-residue polypeptide: Nucleotide-binding protein AM1_1863 (163 aa).

This sequence belongs to the YajQ family.

Its function is as follows. Nucleotide-binding protein. This is Nucleotide-binding protein AM1_1863 from Acaryochloris marina (strain MBIC 11017).